The primary structure comprises 127 residues: Fluoride-specific ion channel FluC (127 aa).

Transmembrane regions (helical) follow at residues 4 to 24 (LLLV…VGVG), 36 to 56 (GTFT…SWLA), 72 to 92 (VGVL…ALMI), and 101 to 121 (FTYS…GLLV). Na(+)-binding residues include Gly76 and Thr79.

Belongs to the fluoride channel Fluc/FEX (TC 1.A.43) family.

It is found in the cell inner membrane. It carries out the reaction fluoride(in) = fluoride(out). Na(+) is not transported, but it plays an essential structural role and its presence is essential for fluoride channel function. Its function is as follows. Fluoride-specific ion channel. Important for reducing fluoride concentration in the cell, thus reducing its toxicity. This is Fluoride-specific ion channel FluC from Caulobacter vibrioides (strain ATCC 19089 / CIP 103742 / CB 15) (Caulobacter crescentus).